The following is a 469-amino-acid chain: Lipase A (469 aa).

A signal peptide spans 1–22; the sequence is MMFLTQLVSALFLFFLGPISYG. The span at 40-51 shows a compositional bias: pro residues; that stretch reads PSEDPFYQPPPG. The tract at residues 40–59 is disordered; it reads PSEDPFYQPPPGYEETEPGT. An N-linked (GlcNAc...) asparagine glycan is attached at Asn111. A disulfide bond links Cys129 and Cys304. Residues Ser217, Asp361, and His393 each act as charge relay system in the active site. The cysteines at positions 377 and 421 are disulfide-linked.

Belongs to the AB hydrolase superfamily. Lipase family. Class Lip subfamily. As to quaternary structure, monomer.

It is found in the secreted. It catalyses the reaction a triacylglycerol + H2O = a diacylglycerol + a fatty acid + H(+). Hydrolyzes triglycerides, with a preference for substrates with short-chain lengths (C4 to C8). The chain is Lipase A from Arthroderma benhamiae (strain ATCC MYA-4681 / CBS 112371) (Trichophyton mentagrophytes).